The primary structure comprises 641 residues: Threonine--tRNA ligase (641 aa).

The 61-residue stretch at 1–61 (MIKINLLNHQ…TQDGDLEILA (61 aa)) folds into the TGS domain. The tract at residues 240-538 (DHKRLNKKLD…LIEENKGVFP (299 aa)) is catalytic. Residues cysteine 334, histidine 385, and histidine 515 each contribute to the Zn(2+) site.

This sequence belongs to the class-II aminoacyl-tRNA synthetase family. In terms of assembly, homodimer. Zn(2+) serves as cofactor.

The protein resides in the cytoplasm. It carries out the reaction tRNA(Thr) + L-threonine + ATP = L-threonyl-tRNA(Thr) + AMP + diphosphate + H(+). In terms of biological role, catalyzes the attachment of threonine to tRNA(Thr) in a two-step reaction: L-threonine is first activated by ATP to form Thr-AMP and then transferred to the acceptor end of tRNA(Thr). Also edits incorrectly charged L-seryl-tRNA(Thr). This is Threonine--tRNA ligase from Phytoplasma australiense.